Consider the following 338-residue polypeptide: 1-aminocyclopropane-1-carboxylate deaminase (338 aa).

At lysine 51 the chain carries N6-(pyridoxal phosphate)lysine. Serine 78 (nucleophile) is an active-site residue.

The protein belongs to the ACC deaminase/D-cysteine desulfhydrase family. As to quaternary structure, homotrimer. It depends on pyridoxal 5'-phosphate as a cofactor.

It carries out the reaction 1-aminocyclopropane-1-carboxylate + H2O = 2-oxobutanoate + NH4(+). Catalyzes a cyclopropane ring-opening reaction, the irreversible conversion of 1-aminocyclopropane-1-carboxylate (ACC) to ammonia and alpha-ketobutyrate. Allows growth on ACC as a nitrogen source. In Pseudomonas putida (Arthrobacter siderocapsulatus), this protein is 1-aminocyclopropane-1-carboxylate deaminase.